Here is a 99-residue protein sequence, read N- to C-terminus: MSAAAQLKSVDYEVFGRVQGVCFRMYTEGEAKKIGVVGWVKNTSKGTVTGQVQGPEEKVNSMKSWLSKVGSPSSRIDRTNFSNEKSISKLEYSNFSIRY.

Ser2 bears the N-acetylserine mark. Positions 9-99 (SVDYEVFGRV…LEYSNFSIRY (91 aa)) constitute an Acylphosphatase-like domain. Active-site residues include Arg24 and Asn42. A Phosphoserine modification is found at Ser93.

It belongs to the acylphosphatase family.

It catalyses the reaction an acyl phosphate + H2O = a carboxylate + phosphate + H(+). Its function is as follows. Its physiological role is not yet clear. The polypeptide is Acylphosphatase-2 (ACYP2) (Cavia porcellus (Guinea pig)).